Reading from the N-terminus, the 329-residue chain is GTP 3',8-cyclase 1 (329 aa).

A Radical SAM core domain is found at 7–230 (GQGRQIDYLR…LDSAEQSGGP (224 aa)). Residue Arg16 coordinates GTP. [4Fe-4S] cluster-binding residues include Cys23 and Cys27. Tyr29 contributes to the S-adenosyl-L-methionine binding site. Cys30 serves as a coordination point for [4Fe-4S] cluster. Arg65 serves as a coordination point for GTP. Residue Gly69 coordinates S-adenosyl-L-methionine. Thr96 serves as a coordination point for GTP. Ser120 lines the S-adenosyl-L-methionine pocket. Lys157 serves as a coordination point for GTP. Met191 is an S-adenosyl-L-methionine binding site. Residues Cys255 and Cys258 each coordinate [4Fe-4S] cluster. A GTP-binding site is contributed by 260–262 (RLR). Residue Cys272 participates in [4Fe-4S] cluster binding.

The protein belongs to the radical SAM superfamily. MoaA family. Monomer and homodimer. [4Fe-4S] cluster is required as a cofactor.

The enzyme catalyses GTP + AH2 + S-adenosyl-L-methionine = (8S)-3',8-cyclo-7,8-dihydroguanosine 5'-triphosphate + 5'-deoxyadenosine + L-methionine + A + H(+). Its pathway is cofactor biosynthesis; molybdopterin biosynthesis. Catalyzes the cyclization of GTP to (8S)-3',8-cyclo-7,8-dihydroguanosine 5'-triphosphate. The protein is GTP 3',8-cyclase 1 (moaA1) of Pseudomonas aeruginosa (strain ATCC 15692 / DSM 22644 / CIP 104116 / JCM 14847 / LMG 12228 / 1C / PRS 101 / PAO1).